An 818-amino-acid polypeptide reads, in one-letter code: Dipeptidyl-peptidase 7 (818 aa).

The signal sequence occupies residues 1–22 (MKLKRILLSVALLCGIGTTAMA). Active-site charge relay system residues include histidine 87, aspartate 223, and serine 645.

It belongs to the peptidase S46 family.

Functionally, catalyzes the removal of dipeptides from the N-terminus of oligopeptides. Most efficiently cleaves the synthetic substrate Met-Leu-methylcoumaryl-7-amide (Met-Leu-MCA), and slowly hydrolyzes Leu-Gln-, Lys-Ala-, Leu-Arg, and Ala-Asn-MCA. Is likely involved in amino acid metabolism and bacterial growth/survival of asaccharolytic P.endodontalis, that utilizes amino acids from extracellular proteinaceous nutrients as energy and carbon sources. The sequence is that of Dipeptidyl-peptidase 7 from Porphyromonas endodontalis (strain ATCC 35406 / DSM 24491 / JCM 8526 / CCUG 16442 / BCRC 14492 / NCTC 13058 / HG 370) (Bacteroides endodontalis).